A 496-amino-acid chain; its full sequence is Probable cytosol aminopeptidase (496 aa).

Mn(2+)-binding residues include Lys262 and Asp267. Lys274 is an active-site residue. 3 residues coordinate Mn(2+): Asp285, Asp344, and Glu346. Residue Arg348 is part of the active site.

The protein belongs to the peptidase M17 family. Mn(2+) serves as cofactor.

The protein localises to the cytoplasm. The catalysed reaction is Release of an N-terminal amino acid, Xaa-|-Yaa-, in which Xaa is preferably Leu, but may be other amino acids including Pro although not Arg or Lys, and Yaa may be Pro. Amino acid amides and methyl esters are also readily hydrolyzed, but rates on arylamides are exceedingly low.. It catalyses the reaction Release of an N-terminal amino acid, preferentially leucine, but not glutamic or aspartic acids.. In terms of biological role, presumably involved in the processing and regular turnover of intracellular proteins. Catalyzes the removal of unsubstituted N-terminal amino acids from various peptides. The polypeptide is Probable cytosol aminopeptidase (Rhizobium johnstonii (strain DSM 114642 / LMG 32736 / 3841) (Rhizobium leguminosarum bv. viciae)).